Here is a 163-residue protein sequence, read N- to C-terminus: UPF0262 protein RPC_4416 (163 aa).

The protein belongs to the UPF0262 family.

The sequence is that of UPF0262 protein RPC_4416 from Rhodopseudomonas palustris (strain BisB18).